Consider the following 205-residue polypeptide: Peroxynitrite isomerase (205 aa).

Residues 1 to 23 form a disordered region; that stretch reads MTEPDPAAAEQRPSVGRNLPTFQ. The short motif at 52–58 is the GXWXGXG element; the sequence is GVWRGEG. Heme b contacts are provided by T63, K168, and H195.

This sequence belongs to the nitrobindin family. In terms of assembly, homodimer. Requires heme b as cofactor.

It catalyses the reaction peroxynitrite = nitrate. Its pathway is nitrogen metabolism. In terms of biological role, heme-binding protein able to scavenge peroxynitrite and to protect free L-tyrosine against peroxynitrite-mediated nitration, by acting as a peroxynitrite isomerase that converts peroxynitrite to nitrate. Therefore, this protein likely plays a role in peroxynitrite sensing and in the detoxification of reactive nitrogen and oxygen species (RNS and ROS, respectively). Is able to bind nitric oxide (NO) in vitro, but may act as a sensor of peroxynitrite levels in vivo. The chain is Peroxynitrite isomerase from Mycobacteroides abscessus (strain ATCC 19977 / DSM 44196 / CCUG 20993 / CIP 104536 / JCM 13569 / NCTC 13031 / TMC 1543 / L948) (Mycobacterium abscessus).